Consider the following 167-residue polypeptide: Modulator of smoothened protein (167 aa).

Transmembrane regions (helical) follow at residues 7 to 29 (ISGC…PDWI), 68 to 88 (TLFF…LLVI), 101 to 121 (WIAF…PVGF), and 139 to 159 (VGSS…GLLF).

Its subcellular location is the cell projection. The protein localises to the cilium membrane. The protein resides in the cell membrane. Functionally, acts as a negative regulator of hedgehog signaling probably by promoting internalization and subsequent degradation of smoothened protein (SMO) present in the ciliary membrane. Plays a role in sonic hedgehog (SHH)-induced spinal neural progenitor cells differentiation. This is Modulator of smoothened protein from Danio rerio (Zebrafish).